The sequence spans 444 residues: N-succinylarginine dihydrolase (444 aa).

Substrate contacts are provided by residues 19 to 28, asparagine 110, and 137 to 138; these read SGLSVGNIAS and HR. Glutamate 174 is an active-site residue. Arginine 214 is a substrate binding site. Histidine 250 is an active-site residue. Substrate-binding residues include aspartate 252 and asparagine 362. The active-site Nucleophile is the cysteine 368.

The protein belongs to the succinylarginine dihydrolase family. In terms of assembly, homodimer.

It carries out the reaction N(2)-succinyl-L-arginine + 2 H2O + 2 H(+) = N(2)-succinyl-L-ornithine + 2 NH4(+) + CO2. Its pathway is amino-acid degradation; L-arginine degradation via AST pathway; L-glutamate and succinate from L-arginine: step 2/5. Its function is as follows. Catalyzes the hydrolysis of N(2)-succinylarginine into N(2)-succinylornithine, ammonia and CO(2). The protein is N-succinylarginine dihydrolase of Aliivibrio salmonicida (strain LFI1238) (Vibrio salmonicida (strain LFI1238)).